The sequence spans 224 residues: dTTP/UTP pyrophosphatase (224 aa).

The active-site Proton acceptor is the Asp77.

The protein belongs to the Maf family. YhdE subfamily. Requires a divalent metal cation as cofactor.

It localises to the cytoplasm. The catalysed reaction is dTTP + H2O = dTMP + diphosphate + H(+). The enzyme catalyses UTP + H2O = UMP + diphosphate + H(+). Nucleoside triphosphate pyrophosphatase that hydrolyzes dTTP and UTP. May have a dual role in cell division arrest and in preventing the incorporation of modified nucleotides into cellular nucleic acids. This is dTTP/UTP pyrophosphatase from Dehalococcoides mccartyi (strain ATCC BAA-2100 / JCM 16839 / KCTC 5957 / BAV1).